Consider the following 611-residue polypeptide: Chaperone protein DnaK (611 aa).

A Phosphothreonine; by autocatalysis modification is found at T173. 2 disordered regions span residues 525 to 548 and 573 to 611; these read DNIS…ALEG and YQQA…EDKK. Residues 529 to 542 show a composition bias toward basic and acidic residues; it reads EEDKSNAESKKDAL. Low complexity predominate over residues 574–591; sequence QQAQQAQQQAQDGAQQTQ. A compositionally biased stretch (basic and acidic residues) spans 599–611; the sequence is AEFKEVNDDEDKK.

The protein belongs to the heat shock protein 70 family.

Its function is as follows. Acts as a chaperone. The chain is Chaperone protein DnaK from Staphylococcus haemolyticus (strain JCSC1435).